The following is a 1486-amino-acid chain: Chromosome partition protein MukB (1486 aa).

34 to 41 provides a ligand contact to ATP; sequence GGNGAGKS. 3 coiled-coil regions span residues 326 to 418, 444 to 480, and 509 to 603; these read LEAD…QYNQ, LETF…QAYQ, and RHLA…RAPV. The flexible hinge stretch occupies residues 666–783; the sequence is PGGSEDQRLN…EVPLFGRAAR (118 aa). Coiled-coil stretches lie at residues 835–923, 977–1115, and 1209–1266; these read EAEI…AKLE, EMLS…TAKA, and VEAI…QNVS.

The protein belongs to the SMC family. MukB subfamily. As to quaternary structure, homodimerization via its hinge domain. Binds to DNA via its C-terminal region. Interacts, and probably forms a ternary complex, with MukE and MukF via its C-terminal region. The complex formation is stimulated by calcium or magnesium. Interacts with tubulin-related protein FtsZ.

The protein resides in the cytoplasm. It localises to the nucleoid. Its function is as follows. Plays a central role in chromosome condensation, segregation and cell cycle progression. Functions as a homodimer, which is essential for chromosome partition. Involved in negative DNA supercoiling in vivo, and by this means organize and compact chromosomes. May achieve or facilitate chromosome segregation by condensation DNA from both sides of a centrally located replisome during cell division. This Escherichia coli O6:H1 (strain CFT073 / ATCC 700928 / UPEC) protein is Chromosome partition protein MukB.